Here is a 183-residue protein sequence, read N- to C-terminus: Heavy metal-associated isoprenylated plant protein 44 (183 aa).

An HMA domain is found at 50 to 113; that stretch reads LQTVELKVRM…AVRRAGKRAE (64 aa). A metal cation-binding residues include Cys61 and Cys64. Position 180 is a cysteine methyl ester (Cys180). Cys180 carries S-farnesyl cysteine lipidation. A propeptide spans 181-183 (removed in mature form); that stretch reads RLM.

The protein belongs to the HIPP family.

In terms of biological role, heavy-metal-binding protein. This chain is Heavy metal-associated isoprenylated plant protein 44, found in Arabidopsis thaliana (Mouse-ear cress).